We begin with the raw amino-acid sequence, 156 residues long: tRNA (cytidine(34)-2'-O)-methyltransferase (156 aa).

S-adenosyl-L-methionine contacts are provided by Gly-102, Leu-124, and Ser-132.

This sequence belongs to the class IV-like SAM-binding methyltransferase superfamily. RNA methyltransferase TrmH family. TrmL subfamily. In terms of assembly, homodimer.

The protein localises to the cytoplasm. It catalyses the reaction cytidine(34) in tRNA + S-adenosyl-L-methionine = 2'-O-methylcytidine(34) in tRNA + S-adenosyl-L-homocysteine + H(+). It carries out the reaction 5-carboxymethylaminomethyluridine(34) in tRNA(Leu) + S-adenosyl-L-methionine = 5-carboxymethylaminomethyl-2'-O-methyluridine(34) in tRNA(Leu) + S-adenosyl-L-homocysteine + H(+). In terms of biological role, methylates the ribose at the nucleotide 34 wobble position in the two leucyl isoacceptors tRNA(Leu)(CmAA) and tRNA(Leu)(cmnm5UmAA). Catalyzes the methyl transfer from S-adenosyl-L-methionine to the 2'-OH of the wobble nucleotide. This Burkholderia pseudomallei (strain 1106a) protein is tRNA (cytidine(34)-2'-O)-methyltransferase.